A 209-amino-acid chain; its full sequence is Ribosomal RNA small subunit methyltransferase G (209 aa).

Residues glycine 71, phenylalanine 76, alanine 122–glutamate 123, and arginine 135 each bind S-adenosyl-L-methionine.

This sequence belongs to the methyltransferase superfamily. RNA methyltransferase RsmG family.

It localises to the cytoplasm. Functionally, specifically methylates the N7 position of a guanine in 16S rRNA. The protein is Ribosomal RNA small subunit methyltransferase G of Flavobacterium psychrophilum (strain ATCC 49511 / DSM 21280 / CIP 103535 / JIP02/86).